The primary structure comprises 433 residues: Bifunctional protein GlmU (433 aa).

The segment at 1 to 226 is pyrophosphorylase; it reads MLSVIILAAG…EECFLGVNSQ (226 aa). Residues 7 to 10, Lys21, and 80 to 81 contribute to the UDP-N-acetyl-alpha-D-glucosamine site; these read LAAG and GT. Mg(2+) is bound at residue Asp106. Gly138, Glu152, Asn167, and Asn224 together coordinate UDP-N-acetyl-alpha-D-glucosamine. Position 224 (Asn224) interacts with Mg(2+). A linker region spans residues 227–247; the sequence is TERAKAEEIMLERLRKNAMDL. Residues 248 to 433 form an N-acetyltransferase region; it reads GVVMQLPSSI…NGYFKFFKKP (186 aa). Arg311 and Lys328 together coordinate UDP-N-acetyl-alpha-D-glucosamine. The Proton acceptor role is filled by His339. 2 residues coordinate UDP-N-acetyl-alpha-D-glucosamine: Tyr342 and Asn353. Acetyl-CoA contacts are provided by residues Ala356, 362 to 363, Ser381, Ser399, and Arg416; that span reads NY.

This sequence in the N-terminal section; belongs to the N-acetylglucosamine-1-phosphate uridyltransferase family. The protein in the C-terminal section; belongs to the transferase hexapeptide repeat family. In terms of assembly, homotrimer. Mg(2+) serves as cofactor.

The protein resides in the cytoplasm. The enzyme catalyses alpha-D-glucosamine 1-phosphate + acetyl-CoA = N-acetyl-alpha-D-glucosamine 1-phosphate + CoA + H(+). It carries out the reaction N-acetyl-alpha-D-glucosamine 1-phosphate + UTP + H(+) = UDP-N-acetyl-alpha-D-glucosamine + diphosphate. It participates in nucleotide-sugar biosynthesis; UDP-N-acetyl-alpha-D-glucosamine biosynthesis; N-acetyl-alpha-D-glucosamine 1-phosphate from alpha-D-glucosamine 6-phosphate (route II): step 2/2. It functions in the pathway nucleotide-sugar biosynthesis; UDP-N-acetyl-alpha-D-glucosamine biosynthesis; UDP-N-acetyl-alpha-D-glucosamine from N-acetyl-alpha-D-glucosamine 1-phosphate: step 1/1. The protein operates within bacterial outer membrane biogenesis; LPS lipid A biosynthesis. Functionally, catalyzes the last two sequential reactions in the de novo biosynthetic pathway for UDP-N-acetylglucosamine (UDP-GlcNAc). The C-terminal domain catalyzes the transfer of acetyl group from acetyl coenzyme A to glucosamine-1-phosphate (GlcN-1-P) to produce N-acetylglucosamine-1-phosphate (GlcNAc-1-P), which is converted into UDP-GlcNAc by the transfer of uridine 5-monophosphate (from uridine 5-triphosphate), a reaction catalyzed by the N-terminal domain. The sequence is that of Bifunctional protein GlmU from Helicobacter pylori (strain HPAG1).